The sequence spans 211 residues: FMN-dependent NADH:quinone oxidoreductase (211 aa).

FMN-binding positions include Ser17–Ser19 and Met102–Phe105.

It belongs to the azoreductase type 1 family. In terms of assembly, homodimer. FMN is required as a cofactor.

The catalysed reaction is 2 a quinone + NADH + H(+) = 2 a 1,4-benzosemiquinone + NAD(+). The enzyme catalyses N,N-dimethyl-1,4-phenylenediamine + anthranilate + 2 NAD(+) = 2-(4-dimethylaminophenyl)diazenylbenzoate + 2 NADH + 2 H(+). Quinone reductase that provides resistance to thiol-specific stress caused by electrophilic quinones. In terms of biological role, also exhibits azoreductase activity. Catalyzes the reductive cleavage of the azo bond in aromatic azo compounds to the corresponding amines. This chain is FMN-dependent NADH:quinone oxidoreductase, found in Geobacillus kaustophilus (strain HTA426).